We begin with the raw amino-acid sequence, 145 residues long: Basic phospholipase A2 beta-bungarotoxin A-AL1 chain (145 aa).

Positions 1 to 17 (MLIFLWCGAVCVSLLGA) are cleaved as a signal peptide. Positions 18 to 25 (ANIPPHPL) are excised as a propeptide. Disulfide bonds link C52-C144, C54-C70, C76-C118, C86-C111, and C104-C116. Ca(2+)-binding residues include Y53, G55, and G57. Residue H73 is part of the active site. Residue D119 is part of the active site.

The protein belongs to the phospholipase A2 family. Group I subfamily. G49 sub-subfamily. In terms of assembly, heterodimer; disulfide-linked. The A chains have phospholipase A2 activity and the B chains show homology with the basic protease inhibitors. The cofactor is Ca(2+). In terms of processing, this enzyme lacks one of the seven disulfide bonds found in similar PLA2 proteins. Expressed by the venom gland.

Its subcellular location is the secreted. It carries out the reaction a 1,2-diacyl-sn-glycero-3-phosphocholine + H2O = a 1-acyl-sn-glycero-3-phosphocholine + a fatty acid + H(+). Functionally, snake venom phospholipase A2 (PLA2) that inhibits neuromuscular transmission by blocking acetylcholine release from the nerve termini. PLA2 catalyzes the calcium-dependent hydrolysis of the 2-acyl groups in 3-sn-phosphoglycerides. The polypeptide is Basic phospholipase A2 beta-bungarotoxin A-AL1 chain (Bungarus multicinctus (Many-banded krait)).